Consider the following 25-residue polypeptide: MNERVKQVASALVDAIQKTLTEQRV.

This sequence belongs to the intradiol ring-cleavage dioxygenase family. The cofactor is Fe(3+).

The enzyme catalyses 3,5-dichlorocatechol + O2 = (2E,4E)-2,4-dichloromuconate + 2 H(+). Its pathway is xenobiotic degradation; 2-(2,4-dichlorophenoxy)propanoate degradation. The protein is Chlorocatechol 1,2-dioxygenase 1 (tfdC) of Delftia acidovorans (Pseudomonas acidovorans).